Here is a 508-residue protein sequence, read N- to C-terminus: Photosystem II CP47 reaction center protein (508 aa).

6 helical membrane passes run 21–36 (AVHIMHTALVSGWAGS), 101–115 (IILSGLLFLAAIWHW), 140–156 (GIHLFLSGLLCFGFGAF), 203–218 (IAAGILGILAGLFHLS), 237–252 (VLSSSIAAVFFAAFIV), and 457–472 (CFALLFFFGHIWHGAR).

This sequence belongs to the PsbB/PsbC family. PsbB subfamily. PSII is composed of 1 copy each of membrane proteins PsbA, PsbB, PsbC, PsbD, PsbE, PsbF, PsbH, PsbI, PsbJ, PsbK, PsbL, PsbM, PsbT, PsbX, PsbY, PsbZ, Psb30/Ycf12, at least 3 peripheral proteins of the oxygen-evolving complex and a large number of cofactors. It forms dimeric complexes. Requires Binds multiple chlorophylls. PSII binds additional chlorophylls, carotenoids and specific lipids. as cofactor.

The protein localises to the plastid. Its subcellular location is the chloroplast thylakoid membrane. Its function is as follows. One of the components of the core complex of photosystem II (PSII). It binds chlorophyll and helps catalyze the primary light-induced photochemical processes of PSII. PSII is a light-driven water:plastoquinone oxidoreductase, using light energy to abstract electrons from H(2)O, generating O(2) and a proton gradient subsequently used for ATP formation. In Chara vulgaris (Common stonewort), this protein is Photosystem II CP47 reaction center protein.